The chain runs to 405 residues: Tryptophan synthase beta chain (405 aa).

N6-(pyridoxal phosphate)lysine is present on K98.

It belongs to the TrpB family. As to quaternary structure, tetramer of two alpha and two beta chains. Pyridoxal 5'-phosphate serves as cofactor.

It catalyses the reaction (1S,2R)-1-C-(indol-3-yl)glycerol 3-phosphate + L-serine = D-glyceraldehyde 3-phosphate + L-tryptophan + H2O. The protein operates within amino-acid biosynthesis; L-tryptophan biosynthesis; L-tryptophan from chorismate: step 5/5. Its function is as follows. The beta subunit is responsible for the synthesis of L-tryptophan from indole and L-serine. The sequence is that of Tryptophan synthase beta chain (trpB) from Xylella fastidiosa (strain 9a5c).